A 649-amino-acid chain; its full sequence is MISASRAAAARLVGAAASRGPTAARHKDGWNGLSHEAFRIVSRRDYASEAIKGAVVGIDLGTTNSCVAVMEGKQAKVLENAEGARTTPSVVAFTSDGERLVGMPAKRQAVTNPNNTFYATKRLIGRRYDDPEVQKDIKNVPFKIVRASNGDAWVEAHGKLYSPSQIGAFVLMKMKETAENYLGHTAKNAVITVPAYFNDSQRQATKDAGQISGLNVLRVINEPTAAALAYGLDKSEDKIIAVYDLGGGTFDISILEIQKGVFEVKSTNGDTFLGGEDFDQALLRHIVKEFKRETGVDLTKDNMALQRVREAAEKAKCELSSSVQTDINLPYLTMDASGPKHLNMKLTRAQFEGIVTDLIRRTIAPCQKAMQDAEVSKSDIGEVILVGGMTRMPKVQQTVQDLFGRAPSKAVNPDEAVAIGAAIQGGVLAGDVTDVLLLDVTPLSLGIETLGGVFTNLSTETPLFQPRKVFSTAADGQTQVEIKVCQGEREMAGDNKLLGQFTLIGIPQPLVESLRLKLPFDIDANGIVHVSAKDKGTGREQQIVIQSSGGLSKDDIENMVKNAEKYAEEDRRKKVTTFSVNMAEGIIHDTETKMEEFKDQLPAEEVNFQNEGTLARKDSETGENIRQAASSLQQASLKLFEWHTKRYVG.

The N-terminal 46 residues, 1-46, are a transit peptide targeting the mitochondrion; that stretch reads MISASRAAAARLVGAAASRGPTAARHKDGWNGLSHEAFRIVSRRDY. Positions 1–432 are interaction with NFS1; it reads MISASRAAAA…IQGGVLAGDV (432 aa). Positions 63 and 64 each coordinate ADP. The tract at residues 63-431 is nucleotide-binding domain (NBD); it reads TNSCVAVMEG…AIQGGVLAGD (369 aa). An N6-acetyllysine modification is found at Lys76. The residue at position 87 (Thr87) is a Phosphothreonine. An N6-acetyllysine; alternate mark is found at Lys135 and Lys138. Lys135 and Lys138 each carry N6-succinyllysine; alternate. N6-acetyllysine is present on Lys143. Lys206 bears the N6-acetyllysine; alternate mark. Lys206 is modified (N6-succinyllysine; alternate). An N6-malonyllysine; alternate modification is found at Lys206. N6-acetyllysine is present on residues Lys234 and Lys288. N6-acetyllysine; alternate is present on Lys300. Lys300 carries the post-translational modification N6-succinyllysine; alternate. ADP is bound by residues Glu313, Lys316, and Ser320. Lys368 carries the N6-succinyllysine modification. Positions 388 and 391 each coordinate ADP. Lys394 is modified (N6-succinyllysine). Ser408 is modified (phosphoserine). An interdomain linker region spans residues 432–441; sequence VTDVLLLDVT. An N6-acetyllysine; alternate mark is found at Lys565, Lys598, and Lys638. Lys565, Lys598, and Lys638 each carry N6-succinyllysine; alternate.

It belongs to the heat shock protein 70 family. As to quaternary structure, interacts strongly with the intermediate form of FXN and weakly with its mature form. Interacts with HSCB. Associates with the mitochondrial contact site and cristae organizing system (MICOS) complex, composed of at least MICOS10/MIC10, CHCHD3/MIC19, CHCHD6/MIC25, APOOL/MIC27, IMMT/MIC60, APOO/MIC23/MIC26 and QIL1/MIC13. This complex was also known under the names MINOS or MitOS complex. The MICOS complex associates with mitochondrial outer membrane proteins SAMM50, MTX1, MTX2 and DNAJC11, mitochondrial inner membrane protein TMEM11 and with HSPA9. Interacts with DNLZ, the interaction is required to prevent self-aggregation. Interacts with TESPA1. Interacts with PDPN. Interacts with NFU1, NFS1 and ISCU. Interacts with TP53; the interaction promotes TP53 degradation. Interacts (via SBD domain) with UBXN2A; the interaction with UBXN2A inhibits HSPA9/MOT-2 interaction with and degradation of TP53, thereby promotes TP53 translocation to the nucleus. Interacts with ITPR1 AND VDAC1; this interaction couples ITPR1 to VDAC1. Component of the TIM23 mitochondrial inner membrane pre-sequence translocase complex.

It localises to the mitochondrion. It is found in the nucleus. The protein localises to the nucleolus. The protein resides in the cytoplasm. Its subcellular location is the mitochondrion matrix. It carries out the reaction ATP + H2O = ADP + phosphate + H(+). Its activity is regulated as follows. The chaperone activity is regulated by ATP-induced allosteric coupling of the nucleotide-binding (NBD) and substrate-binding (SBD) domains. ATP binding in the NBD leads to a conformational change in the NBD, which is transferred through the interdomain linker (IDL) to the substrate-binding domain (SBD). This elicits a reduced substrate affinity and a faster substrate exchange rate. Upon hydrolysis of ATP to ADP, the protein undergoes a conformational change that increases its affinity for substrate proteins. It cycles through repeated phases of ATP hydrolysis and nucleotide exchange, facilitating repeated cycles of substrate binding and release. Functions in collaboration with co-chaperones. Functions with the co-chaperone, DNLZ, to maintain solubility and regulate ATP hydrolysis. Nucleotide exchange factors, GRPEL1 and GRPEL2, accelerate nucleotide exchange. Mitochondrial chaperone that plays a key role in mitochondrial protein import, folding, and assembly. Plays an essential role in the protein quality control system, the correct folding of proteins, the re-folding of misfolded proteins, and the targeting of proteins for subsequent degradation. These processes are achieved through cycles of ATP binding, ATP hydrolysis, and ADP release, mediated by co-chaperones. In mitochondria, it associates with the TIM (translocase of the inner membrane) protein complex to assist in the import and folding of mitochondrial proteins. Plays an important role in mitochondrial iron-sulfur cluster (ISC) biogenesis, interacts with and stabilizes ISC cluster assembly proteins FXN, NFU1, NFS1 and ISCU. Regulates erythropoiesis via stabilization of ISC assembly. Regulates mitochondrial calcium-dependent apoptosis by coupling two calcium channels, ITPR1 and VDAC1, at the mitochondria-associated endoplasmic reticulum (ER) membrane to facilitate calcium transport from the ER lumen to the mitochondria intermembrane space, providing calcium for the downstream calcium channel MCU, which releases it into the mitochondrial matrix. Although primarily located in the mitochondria, it is also found in other cellular compartments. In the cytosol, it associates with proteins involved in signaling, apoptosis, or senescence. It may play a role in cell cycle regulation via its interaction with and promotion of degradation of TP53. May play a role in the control of cell proliferation and cellular aging. Protects against reactive oxygen species (ROS). Extracellular HSPA9 plays a cytoprotective role by preventing cell lysis following immune attack by the membrane attack complex by disrupting formation of the complex. In Canis lupus familiaris (Dog), this protein is Stress-70 protein, mitochondrial.